Reading from the N-terminus, the 40-residue chain is Allophycocyanin alpha-B chain (40 aa).

This sequence belongs to the phycobiliprotein family. In terms of assembly, heterodimer of an alpha and a beta chain. Post-translationally, contains one covalently linked bilin chromophore.

The protein resides in the cellular thylakoid membrane. In terms of biological role, light-harvesting photosynthetic bile pigment-protein from the phycobiliprotein complex. Allophycocyanin has a maximum absorption at approximately 650 nanometers. The chain is Allophycocyanin alpha-B chain from Mastigocladus laminosus (Fischerella sp.).